The chain runs to 128 residues: NADPH-dependent 7-cyano-7-deazaguanine reductase (128 aa).

C39 serves as the catalytic Thioimide intermediate. D46 serves as the catalytic Proton donor. Residues 61-63 (IEL) and 80-81 (HE) contribute to the substrate site.

This sequence belongs to the GTP cyclohydrolase I family. QueF type 1 subfamily.

It is found in the cytoplasm. It catalyses the reaction 7-aminomethyl-7-carbaguanine + 2 NADP(+) = 7-cyano-7-deazaguanine + 2 NADPH + 3 H(+). The protein operates within tRNA modification; tRNA-queuosine biosynthesis. Catalyzes the NADPH-dependent reduction of 7-cyano-7-deazaguanine (preQ0) to 7-aminomethyl-7-deazaguanine (preQ1). The chain is NADPH-dependent 7-cyano-7-deazaguanine reductase from Magnetococcus marinus (strain ATCC BAA-1437 / JCM 17883 / MC-1).